The chain runs to 361 residues: Collagenase (361 aa).

It belongs to the peptidase U32 family. As to quaternary structure, homodimer. A metal cation is required as a cofactor.

With respect to regulation, activity somewhat enhanced by calcium ions, inhibited by zinc and Fe(3+) ions and by p-chloromercuribenzoic acid and EDTA. Activity is enhanced by salivary peptide cystatin and reduced by salivary peptide histatin. Its function is as follows. Has collagenase activity. Active on soluble collagen, reconstituted type I collagen, heat denatured type I collagen and azocoll, but not gelatin or the synthetic bacterial collagenase substrate PZ-PLGPA. May play a role in virulence. The chain is Collagenase from Porphyromonas gingivalis (Bacteroides gingivalis).